We begin with the raw amino-acid sequence, 216 residues long: RNA pyrophosphohydrolase (216 aa).

In terms of domain architecture, Nudix hydrolase spans 6–149; that stretch reads GFRPNVGIIL…KRDVYQLALT (144 aa). Residues 38–59 carry the Nudix box motif; the sequence is GGIKYGETPMQAMYRELHEETG. The segment at 159–191 is disordered; sequence AQRTDKSRGPRAPRYPRVANGHAASETPAAIDT.

The protein belongs to the Nudix hydrolase family. RppH subfamily. A divalent metal cation is required as a cofactor.

In terms of biological role, accelerates the degradation of transcripts by removing pyrophosphate from the 5'-end of triphosphorylated RNA, leading to a more labile monophosphorylated state that can stimulate subsequent ribonuclease cleavage. The protein is RNA pyrophosphohydrolase of Burkholderia pseudomallei (strain 668).